A 283-amino-acid chain; its full sequence is Putative sugar uptake protein BA_0200/GBAA_0200/BAS0200 (283 aa).

10 helical membrane-spanning segments follow: residues 4–21 (LLAL…LVSV), 26–48 (GAYS…MYVF), 52–71 (ALTM…WALG), 84–106 (VSTT…GVIA), 110–132 (WTTT…GVVF), 151–173 (LLTL…WYNI), 178–195 (AILP…VLTS), 208–230 (ALSG…RVGV), 234–253 (FPLS…VFLG), and 260–279 (QLIF…VLLG).

This sequence belongs to the GRP transporter (TC 2.A.7.5) family.

It is found in the cell membrane. This is Putative sugar uptake protein BA_0200/GBAA_0200/BAS0200 from Bacillus anthracis.